A 314-amino-acid chain; its full sequence is Malate dehydrogenase (314 aa).

NAD(+) is bound by residues 11–16 and Asp35; that span reads GSGNIG. Arg84 and Arg90 together coordinate substrate. Residues Asn97 and 120 to 122 each bind NAD(+); that span reads ITN. Substrate is bound by residues Asn122 and Arg153. The active-site Proton acceptor is His177.

It belongs to the LDH/MDH superfamily. MDH type 3 family.

It carries out the reaction (S)-malate + NAD(+) = oxaloacetate + NADH + H(+). Functionally, catalyzes the reversible oxidation of malate to oxaloacetate. The chain is Malate dehydrogenase from Rickettsia rickettsii (strain Iowa).